A 179-amino-acid chain; its full sequence is RNA polymerase sigma-E factor (179 aa).

Positions aspartate 36–tryptophan 49 match the Polymerase core binding motif. The H-T-H motif DNA-binding region spans threonine 130 to histidine 149.

The protein belongs to the sigma-70 factor family. ECF subfamily.

It is found in the cytoplasm. Sigma factors are initiation factors that promote the attachment of RNA polymerase to specific initiation sites and are then released. This sigma factor is required for normal cell wall integrity; it is recruited by RNA polymerase to transcribe genes with cell wall-related functions. The chain is RNA polymerase sigma-E factor (sigE) from Streptomyces avermitilis (strain ATCC 31267 / DSM 46492 / JCM 5070 / NBRC 14893 / NCIMB 12804 / NRRL 8165 / MA-4680).